A 470-amino-acid chain; its full sequence is Sulfate adenylyltransferase subunit 1 (470 aa).

Residues 22–236 (KELLRFITCG…YLETIKIDYA (215 aa)) form the tr-type G domain. The segment at 31 to 38 (GSVDDGKS) is G1. 31 to 38 (GSVDDGKS) lines the GTP pocket. The tract at residues 89–93 (GITID) is G2. A G3 region spans residues 110 to 113 (DTPG). Residues 110-114 (DTPGH) and 165-168 (NKMD) each bind GTP. Residues 165–168 (NKMD) form a G4 region. The G5 stretch occupies residues 202–204 (SAL).

Belongs to the TRAFAC class translation factor GTPase superfamily. Classic translation factor GTPase family. CysN/NodQ subfamily. As to quaternary structure, heterodimer composed of CysD, the smaller subunit, and CysN.

It catalyses the reaction sulfate + ATP + H(+) = adenosine 5'-phosphosulfate + diphosphate. The protein operates within sulfur metabolism; hydrogen sulfide biosynthesis; sulfite from sulfate: step 1/3. In terms of biological role, with CysD forms the ATP sulfurylase (ATPS) that catalyzes the adenylation of sulfate producing adenosine 5'-phosphosulfate (APS) and diphosphate, the first enzymatic step in sulfur assimilation pathway. APS synthesis involves the formation of a high-energy phosphoric-sulfuric acid anhydride bond driven by GTP hydrolysis by CysN coupled to ATP hydrolysis by CysD. This Francisella tularensis subsp. novicida (strain U112) protein is Sulfate adenylyltransferase subunit 1.